The sequence spans 85 residues: U4-theraphotoxin-Hhn1q (85 aa).

The first 22 residues, 1 to 22 (MKVTLIAILTCAAVLVLHTTAA), serve as a signal peptide directing secretion. A propeptide spanning residues 23 to 48 (EELEAESQLMEVGMPDTELAAVDEER) is cleaved from the precursor. 3 disulfides stabilise this stretch: Cys-52–Cys-66, Cys-56–Cys-77, and Cys-71–Cys-82.

Belongs to the neurotoxin 12 (Hwtx-2) family. 02 (Hwtx-2) subfamily. In terms of tissue distribution, expressed by the venom gland.

Its subcellular location is the secreted. Postsynaptic neurotoxin. This is U4-theraphotoxin-Hhn1q from Cyriopagopus hainanus (Chinese bird spider).